The sequence spans 59 residues: Potassium channel toxin alpha-KTx 1.14 (59 aa).

The first 22 residues, 1 to 22 (MKKISFLLLLAIVICSIGWTDG), serve as a signal peptide directing secretion. Gln23 is subject to Pyrrolidone carboxylic acid. Cystine bridges form between Cys29–Cys50, Cys35–Cys55, and Cys39–Cys57.

It belongs to the short scorpion toxin superfamily. Potassium channel inhibitor family. Alpha-KTx 01 subfamily. Expressed by the venom gland.

Its subcellular location is the secreted. Its function is as follows. Potent blocker of both large-conductance calcium-activated potassium channels (KCa1.1/KCNMA1) and voltage-gated potassium channels (Kv1.3/KCNA3 and ERG1/Kv11.1/KCNH2). The protein is Potassium channel toxin alpha-KTx 1.14 of Olivierus martensii (Manchurian scorpion).